Reading from the N-terminus, the 163-residue chain is Arginine repressor (163 aa).

This sequence belongs to the ArgR family.

Its subcellular location is the cytoplasm. The protein operates within amino-acid biosynthesis; L-arginine biosynthesis [regulation]. In terms of biological role, regulates arginine biosynthesis genes. The sequence is that of Arginine repressor from Anaeromyxobacter dehalogenans (strain 2CP-C).